Reading from the N-terminus, the 82-residue chain is uncharacterized protein (82 aa).

This is an uncharacterized protein from Sinorhizobium fredii (strain NBRC 101917 / NGR234).